Reading from the N-terminus, the 1820-residue chain is Kinesin-like protein KIF20B (1820 aa).

A Kinesin motor domain is found at 58–479 (YLQVCLRIRP…LKFSAIAQKV (422 aa)). 152–159 (GLTNSGKT) contributes to the ATP binding site. Serine 488 is subject to Phosphoserine. Coiled coils occupy residues 523 to 603 (ENSL…KIRE) and 674 to 793 (GFED…MENT). Threonine 560 carries the post-translational modification Phosphothreonine. Residues 829–866 (SERKRVNENELQQDEPPAKKGSIHVSSAITEDQKKSEE) are disordered. Position 997 is a phosphoserine (serine 997). A necessary and sufficient for interaction with SHTN1 region spans residues 1050–1107 (ENSFHSSIEAIWEECKEIVKASSKKSHQIEELEQQIEKLQAEVKGYKDENNRLKEKEH). The segment covering 1247–1264 (EEEEETNRQETEKLKEEL) has biased composition (basic and acidic residues). The segment at 1247–1275 (EEEEETNRQETEKLKEELSASSARTQNLK) is disordered. A compositionally biased stretch (polar residues) spans 1265-1274 (SASSARTQNL). The segment at 1560–1820 (IETQIMDIKP…KRRLRTKTAK (261 aa)) is interaction with PIN1. Serine 1588 bears the Phosphoserine mark. The residue at position 1644 (threonine 1644) is a Phosphothreonine; by CDK1. Phosphoserine occurs at positions 1658, 1715, and 1740. Polar residues predominate over residues 1760 to 1772 (LSNVEASKENVSQ). The interval 1760-1781 (LSNVEASKENVSQPKRAKRKLY) is disordered.

It belongs to the TRAFAC class myosin-kinesin ATPase superfamily. Kinesin family. In terms of assembly, oligomerizes (via kinesin motor domain). Associates with microtubules. Interacts (via C-terminal globular tail region) with PIN1 (via WW domain). Interacts with PRC1. Interacts with SHTN1 (via N-terminus); the interaction is direct and promotes the association of SHTN1 to microtubules in primary neurons. In terms of processing, phosphorylated during mitosis by CDK1. As to expression, brain, ovary, kidney and testis (at protein level). Overexpressed in bladder cancer cells (at protein level). Expressed in testis. Overexpressed in bladder cancer cells.

It is found in the nucleus. The protein localises to the cytoplasm. It localises to the cytoskeleton. Its subcellular location is the microtubule organizing center. The protein resides in the centrosome. It is found in the nucleolus. The protein localises to the nucleoplasm. It localises to the spindle. Its subcellular location is the spindle pole. The protein resides in the midbody. It is found in the cell projection. The protein localises to the axon. It localises to the growth cone. Its function is as follows. Plus-end-directed motor enzyme that is required for completion of cytokinesis. Required for proper midbody organization and abscission in polarized cortical stem cells. Plays a role in the regulation of neuronal polarization by mediating the transport of specific cargos. Participates in the mobilization of SHTN1 and in the accumulation of PIP3 in the growth cone of primary hippocampal neurons in a tubulin and actin-dependent manner. In the developing telencephalon, cooperates with SHTN1 to promote both the transition from the multipolar to the bipolar stage and the radial migration of cortical neurons from the ventricular zone toward the superficial layer of the neocortex. Involved in cerebral cortex growth. Acts as an oncogene for promoting bladder cancer cells proliferation, apoptosis inhibition and carcinogenic progression. The protein is Kinesin-like protein KIF20B of Homo sapiens (Human).